The chain runs to 380 residues: Glucose-1-phosphate adenylyltransferase (380 aa).

Residues glycine 164, 179-180 (EK), and serine 190 contribute to the alpha-D-glucose 1-phosphate site.

This sequence belongs to the bacterial/plant glucose-1-phosphate adenylyltransferase family. As to quaternary structure, homotetramer.

It catalyses the reaction alpha-D-glucose 1-phosphate + ATP + H(+) = ADP-alpha-D-glucose + diphosphate. It participates in glycan biosynthesis; glycogen biosynthesis. In terms of biological role, involved in the biosynthesis of ADP-glucose, a building block required for the elongation reactions to produce glycogen. Catalyzes the reaction between ATP and alpha-D-glucose 1-phosphate (G1P) to produce pyrophosphate and ADP-Glc. This chain is Glucose-1-phosphate adenylyltransferase, found in Lactococcus lactis subsp. cremoris (strain SK11).